Consider the following 281-residue polypeptide: Fructose-bisphosphate aldolase class 1 (281 aa).

Lys-191 functions as the Schiff-base intermediate with dihydroxyacetone-P in the catalytic mechanism.

This sequence belongs to the DeoC/FbaB aldolase family. As to quaternary structure, homooctamer.

It localises to the cytoplasm. The catalysed reaction is beta-D-fructose 1,6-bisphosphate = D-glyceraldehyde 3-phosphate + dihydroxyacetone phosphate. Its activity is regulated as follows. Activated by citrate. The chain is Fructose-bisphosphate aldolase class 1 (fba) from Pyrococcus abyssi (strain GE5 / Orsay).